Consider the following 318-residue polypeptide: Protein teg (318 aa).

Residues Ile-7–Ile-182 enclose the PNPLA domain. Residues Gly-11–Gly-16 carry the GXGXXG motif. Residues Gly-42–Gly-46 carry the GXSXG motif. Residue Ser-44 is the Nucleophile of the active site. Residue Asp-169 is the Proton acceptor of the active site.

Functionally, probable lipid hydrolase. The sequence is that of Protein teg (teg) from Priestia megaterium (strain ATCC 14581 / DSM 32 / CCUG 1817 / JCM 2506 / NBRC 15308 / NCIMB 9376 / NCTC 10342 / NRRL B-14308 / VKM B-512 / Ford 19) (Bacillus megaterium).